A 61-amino-acid chain; its full sequence is Metallothionein-1A (61 aa).

Methionine 1 is modified (N-acetylmethionine). The segment at 1 to 29 (MDPNCSCPTGGSCSCAGSCTCKACRCTSC) is beta. Residues cysteine 5, cysteine 7, cysteine 13, cysteine 15, cysteine 19, cysteine 21, cysteine 24, cysteine 26, cysteine 29, cysteine 33, cysteine 34, cysteine 36, cysteine 37, cysteine 41, cysteine 44, cysteine 48, cysteine 50, and cysteine 57 each coordinate a divalent metal cation. The tract at residues 30 to 61 (KKSCCSCCPAGCARCAQGCICKGASDKCSCCA) is alpha. Serine 58 is modified (phosphoserine). 2 residues coordinate a divalent metal cation: cysteine 59 and cysteine 60.

The protein belongs to the metallothionein superfamily. Type 1 family. In terms of assembly, monomer.

Its function is as follows. Metallothioneins have a high content of cysteine residues that bind various heavy metals; these proteins are transcriptionally regulated by both heavy metals and glucocorticoids. The polypeptide is Metallothionein-1A (MT1A) (Sus scrofa (Pig)).